Consider the following 319-residue polypeptide: Cobalamin biosynthesis protein CobD (319 aa).

4 helical membrane-spanning segments follow: residues 56–76 (GLWI…LWLM), 153–173 (VDGV…LAMA), 204–224 (LANW…AWFI), and 290–310 (IPLS…LFAL).

It belongs to the CobD/CbiB family.

The protein resides in the cell membrane. It functions in the pathway cofactor biosynthesis; adenosylcobalamin biosynthesis. Converts cobyric acid to cobinamide by the addition of aminopropanol on the F carboxylic group. This is Cobalamin biosynthesis protein CobD from Photorhabdus laumondii subsp. laumondii (strain DSM 15139 / CIP 105565 / TT01) (Photorhabdus luminescens subsp. laumondii).